A 481-amino-acid chain; its full sequence is Glutamyl-tRNA(Gln) amidotransferase subunit A (481 aa).

Active-site charge relay system residues include lysine 76 and serine 151. Serine 175 functions as the Acyl-ester intermediate in the catalytic mechanism.

Belongs to the amidase family. GatA subfamily. As to quaternary structure, heterotrimer of A, B and C subunits.

The enzyme catalyses L-glutamyl-tRNA(Gln) + L-glutamine + ATP + H2O = L-glutaminyl-tRNA(Gln) + L-glutamate + ADP + phosphate + H(+). Its function is as follows. Allows the formation of correctly charged Gln-tRNA(Gln) through the transamidation of misacylated Glu-tRNA(Gln) in organisms which lack glutaminyl-tRNA synthetase. The reaction takes place in the presence of glutamine and ATP through an activated gamma-phospho-Glu-tRNA(Gln). This is Glutamyl-tRNA(Gln) amidotransferase subunit A from Neisseria meningitidis serogroup C (strain 053442).